We begin with the raw amino-acid sequence, 616 residues long: Chaperone protein HscA (616 aa).

This sequence belongs to the heat shock protein 70 family.

Functionally, chaperone involved in the maturation of iron-sulfur cluster-containing proteins. Has a low intrinsic ATPase activity which is markedly stimulated by HscB. Involved in the maturation of IscU. The polypeptide is Chaperone protein HscA (Salmonella typhimurium (strain LT2 / SGSC1412 / ATCC 700720)).